The sequence spans 579 residues: DNA ligase 1 (579 aa).

Glu244 lines the ATP pocket. Lys246 acts as the N6-AMP-lysine intermediate in catalysis. ATP-binding residues include Arg251, Arg266, Glu296, Phe342, Arg419, and Lys425.

The protein belongs to the ATP-dependent DNA ligase family. Mg(2+) serves as cofactor.

It catalyses the reaction ATP + (deoxyribonucleotide)n-3'-hydroxyl + 5'-phospho-(deoxyribonucleotide)m = (deoxyribonucleotide)n+m + AMP + diphosphate.. Its function is as follows. DNA ligase that seals nicks in double-stranded DNA during DNA replication, DNA recombination and DNA repair. In Methanosarcina mazei (strain ATCC BAA-159 / DSM 3647 / Goe1 / Go1 / JCM 11833 / OCM 88) (Methanosarcina frisia), this protein is DNA ligase 1.